Reading from the N-terminus, the 361-residue chain is Peptide chain release factor 1 (361 aa).

Q235 bears the N5-methylglutamine mark.

The protein belongs to the prokaryotic/mitochondrial release factor family. Post-translationally, methylated by PrmC. Methylation increases the termination efficiency of RF1.

Its subcellular location is the cytoplasm. In terms of biological role, peptide chain release factor 1 directs the termination of translation in response to the peptide chain termination codons UAG and UAA. In Xanthomonas campestris pv. campestris (strain B100), this protein is Peptide chain release factor 1.